The chain runs to 785 residues: Endonuclease MutS2 (785 aa).

Residue 335 to 342 (GPNTGGKT) coordinates ATP. The Smr domain occupies 710-785 (LDLRGERYED…GNGVTIVEFK (76 aa)).

It belongs to the DNA mismatch repair MutS family. MutS2 subfamily. As to quaternary structure, homodimer. Binds to stalled ribosomes, contacting rRNA.

In terms of biological role, endonuclease that is involved in the suppression of homologous recombination and thus may have a key role in the control of bacterial genetic diversity. Acts as a ribosome collision sensor, splitting the ribosome into its 2 subunits. Detects stalled/collided 70S ribosomes which it binds and splits by an ATP-hydrolysis driven conformational change. Acts upstream of the ribosome quality control system (RQC), a ribosome-associated complex that mediates the extraction of incompletely synthesized nascent chains from stalled ribosomes and their subsequent degradation. Probably generates substrates for RQC. This chain is Endonuclease MutS2, found in Listeria monocytogenes serotype 4a (strain HCC23).